Here is a 193-residue protein sequence, read N- to C-terminus: NADH-quinone oxidoreductase subunit B (193 aa).

Residues Cys-72, Cys-73, Cys-137, and Cys-167 each coordinate [4Fe-4S] cluster.

The protein belongs to the complex I 20 kDa subunit family. NDH-1 is composed of 14 different subunits. Subunits NuoB, C, D, E, F, and G constitute the peripheral sector of the complex. The cofactor is [4Fe-4S] cluster.

Its subcellular location is the cell inner membrane. The enzyme catalyses a quinone + NADH + 5 H(+)(in) = a quinol + NAD(+) + 4 H(+)(out). Its function is as follows. NDH-1 shuttles electrons from NADH, via FMN and iron-sulfur (Fe-S) centers, to quinones in the respiratory chain. The immediate electron acceptor for the enzyme in this species is believed to be ubiquinone. Couples the redox reaction to proton translocation (for every two electrons transferred, four hydrogen ions are translocated across the cytoplasmic membrane), and thus conserves the redox energy in a proton gradient. This is NADH-quinone oxidoreductase subunit B from Bartonella quintana (strain Toulouse) (Rochalimaea quintana).